A 675-amino-acid polypeptide reads, in one-letter code: Potassium-transporting ATPase ATP-binding subunit (675 aa).

Transmembrane regions (helical) follow at residues 34–54 (IMFVVEVGMILTLILICFPDI), 65–85 (LITIFIILLITILFANFSEAF), 216–236 (IALFTLLTTLTIIFLVVIVTL), and 245–265 (LILPIAMLIALTVCLIPTTIG). Asp304 functions as the 4-aspartylphosphate intermediate in the catalytic mechanism. ATP is bound by residues Asp341, Glu345, 372–379 (FTAETRMS), and Lys390. Mg(2+) is bound by residues Asp513 and Asp517. The next 3 helical transmembrane spans lie at 569–591 (ALTTFSLANDVAKYFAILPALMM), 611–631 (AIISALIFNALIIVALIPIAM), and 644–664 (IFINNMLIYGLGGLIVPFLGI).

It belongs to the cation transport ATPase (P-type) (TC 3.A.3) family. Type IA subfamily. As to quaternary structure, the system is composed of three essential subunits: KdpA, KdpB and KdpC.

The protein localises to the cell membrane. The enzyme catalyses K(+)(out) + ATP + H2O = K(+)(in) + ADP + phosphate + H(+). In terms of biological role, part of the high-affinity ATP-driven potassium transport (or Kdp) system, which catalyzes the hydrolysis of ATP coupled with the electrogenic transport of potassium into the cytoplasm. This subunit is responsible for energy coupling to the transport system and for the release of the potassium ions to the cytoplasm. The sequence is that of Potassium-transporting ATPase ATP-binding subunit from Staphylococcus aureus (strain Newman).